A 511-amino-acid chain; its full sequence is Synaptotagmin-6 (511 aa).

Residues 1–59 (MSGVWGAGGPRCQAALAVLASLCRARPPPLGLDVETCRSFELQSPEQSPSAADSGTSVS) are Vesicular-facing. The tract at residues 12–38 (CQAALAVLASLCRARPPPLGLDVETCR) is cysteine motif. The helical transmembrane segment at 60-80 (LLAVVVIVCGVALVAVFLFLF) threads the bilayer. Residues 81–511 (WKLCWMPWRK…KSFKEGTPRL (431 aa)) lie on the Cytoplasmic side of the membrane. Disordered regions lie at residues 92-119 (EASS…ADKL) and 157-182 (TKLQ…LPRQ). Residues 94–103 (SSPSSANPAS) are compositionally biased toward low complexity. Composition is skewed to polar residues over residues 104-113 (ETLQSPSSRG) and 160-172 (QRQT…STRH). Serine 217 carries the phosphoserine modification. 2 consecutive C2 domains span residues 230-351 (SCGK…SIWK) and 362-495 (DLGE…AHWH). Residues aspartate 261, aspartate 267, aspartate 319, phenylalanine 320, aspartate 321, serine 324, aspartate 327, aspartate 393, aspartate 399, aspartate 453, and aspartate 455 each coordinate Ca(2+). The necessary for cell membrane association (isoform 2) stretch occupies residues 483-511 (MLAYPRKPIAHWHSLVEVKKSFKEGTPRL).

It belongs to the synaptotagmin family. As to quaternary structure, isoform 1: Homodimer; disulfide-linked via the cysteine motif. Isoform 1: Can also form heterodimers with SYT3, SYT7, SYT9 and SYT10. Isoform 1: Interacts with STX1A, STX1B and STX2; the interaction is Ca(2+)-dependent. Isoform 2: Is not able to form homodimer and heterodimers. Ca(2+) serves as cofactor. As to expression, isoform 1 is expressed in the olfactory bulb. Isoform 2 is expressed in the brain (at protein level).

The protein resides in the cytoplasmic vesicle. Its subcellular location is the secretory vesicle. It is found in the synaptic vesicle membrane. It localises to the membrane. The protein localises to the cytoplasm. The protein resides in the cytosol. Its subcellular location is the cell membrane. May be involved in Ca(2+)-dependent exocytosis of secretory vesicles through Ca(2+) and phospholipid binding to the C2 domain or may serve as Ca(2+) sensors in the process of vesicular trafficking and exocytosis. May mediate Ca(2+)-regulation of exocytosis in acrosomal reaction in sperm. This Mus musculus (Mouse) protein is Synaptotagmin-6 (Syt6).